Reading from the N-terminus, the 381-residue chain is MGRKRVVVLGAGGSIGKNSLEIIRRFPDRFELAGFSVHSNSGFAKTLLAEFTDAQFVSTKKKNSNLKHEIDEEAVRRLIEKSKADIVINGIAGSAGLKASVEVIKSGLDLALANKETIVEAGELIFQDAEKSGSTIIPVDSEHAAIFQLINAHKKGNIEKIIITASGGPFLNTPREKLSTIKLEDALKHPTWKMGGKISIDSASLANKALEVIEAVKLFSFPPEKIEVTVHPQSIIHSMVQCKNGEIFAQASPPDMKNPILNALSFPKMPESFLKPLDFSQIIKLEFMPPRTDDFPMLALGFEAAGKGGAYPIAFNVANEEAVDAFIKGKIGFTDLADITQEVLNSDWTMKPSSYEEVYDYENRARAIALARILDRVNGLQ.

Glycine 13, serine 14, isoleucine 15, asparagine 40, and asparagine 114 together coordinate NADPH. 1-deoxy-D-xylulose 5-phosphate is bound at residue lysine 115. Glutamate 116 provides a ligand contact to NADPH. Aspartate 140 is a binding site for Mn(2+). Residues serine 141, glutamate 142, serine 166, and histidine 189 each coordinate 1-deoxy-D-xylulose 5-phosphate. Glutamate 142 is a binding site for Mn(2+). Residue glycine 195 participates in NADPH binding. Residues serine 202, asparagine 207, lysine 208, and glutamate 211 each contribute to the 1-deoxy-D-xylulose 5-phosphate site. Glutamate 211 contributes to the Mn(2+) binding site.

This sequence belongs to the DXR family. Mg(2+) is required as a cofactor. It depends on Mn(2+) as a cofactor.

The enzyme catalyses 2-C-methyl-D-erythritol 4-phosphate + NADP(+) = 1-deoxy-D-xylulose 5-phosphate + NADPH + H(+). Its pathway is isoprenoid biosynthesis; isopentenyl diphosphate biosynthesis via DXP pathway; isopentenyl diphosphate from 1-deoxy-D-xylulose 5-phosphate: step 1/6. Catalyzes the NADPH-dependent rearrangement and reduction of 1-deoxy-D-xylulose-5-phosphate (DXP) to 2-C-methyl-D-erythritol 4-phosphate (MEP). The chain is 1-deoxy-D-xylulose 5-phosphate reductoisomerase from Treponema denticola (strain ATCC 35405 / DSM 14222 / CIP 103919 / JCM 8153 / KCTC 15104).